Reading from the N-terminus, the 243-residue chain is Ribosomal RNA small subunit methyltransferase J (243 aa).

Residues 112 to 113 (ER) and aspartate 164 each bind S-adenosyl-L-methionine.

It belongs to the methyltransferase superfamily. RsmJ family.

It is found in the cytoplasm. It carries out the reaction guanosine(1516) in 16S rRNA + S-adenosyl-L-methionine = N(2)-methylguanosine(1516) in 16S rRNA + S-adenosyl-L-homocysteine + H(+). Specifically methylates the guanosine in position 1516 of 16S rRNA. The protein is Ribosomal RNA small subunit methyltransferase J of Legionella pneumophila (strain Lens).